A 415-amino-acid chain; its full sequence is BTB/POZ and MATH domain-containing protein 6 (415 aa).

Positions 1-33 (MSKLMTRTSGSSSPNTIPDQIESPTSSRSVTQT) are disordered. One can recognise an MATH domain in the interval 35-169 (NGSHQFVIQG…DDCLKINCTV (135 aa)). The 67-residue stretch at 205–271 (SDVTFDVAGE…MYKDSLPGDV (67 aa)) folds into the BTB domain. The segment at 385-415 (SSSGGGKSQSVWAQLSNGGETSSRRVRQRTT) is disordered. Residues 392–405 (SQSVWAQLSNGGET) show a composition bias toward polar residues.

Belongs to the Tdpoz family. In terms of assembly, heterodimer with BPM1. Interacts with RAP2-4. Interacts with CUL3A. Binds to MYB56 at the promoter of FLOWERING LOCUS T (FT). As to expression, ubiquitous.

The protein resides in the nucleus. Its subcellular location is the cytoplasm. It participates in protein modification; protein ubiquitination. May act as a substrate-specific adapter of an E3 ubiquitin-protein ligase complex (CUL3-RBX1-BTB) which mediates the ubiquitination and subsequent proteasomal degradation of target proteins. This is BTB/POZ and MATH domain-containing protein 6 (BPM6) from Arabidopsis thaliana (Mouse-ear cress).